Here is a 317-residue protein sequence, read N- to C-terminus: Alkylsulfatase (317 aa).

Histidine 78 is a binding site for substrate. Residues histidine 105 and aspartate 107 each contribute to the Fe cation site. Valine 108 is a binding site for substrate. A 2-oxoglutarate-binding site is contributed by threonine 132. Histidine 261 provides a ligand contact to Fe cation. 2-oxoglutarate-binding residues include arginine 272 and arginine 276.

Belongs to the TfdA dioxygenase family. Homotetramer. Fe(2+) serves as cofactor.

In terms of biological role, alpha-ketoglutarate-dependent dioxygenase that in vitro catalyzes the oxygenolytic release of sulfite from hexylsulfate. This chain is Alkylsulfatase, found in Acinetobacter baylyi (strain ATCC 33305 / BD413 / ADP1).